We begin with the raw amino-acid sequence, 365 residues long: MMKKNLMLIFGGVSFEHEISLRSACGIYSALMKLDKYNVFSSFIDKITGVWYLLDSVPDDPKLIKKDSSAIISLIPGYGIFVNNKDLKIDVVFPIVHGRTGEDGAIQGFLKIMDIPCVGSGILGSAISINKYFCKLLLKSFNIPLVPFIGFKKYDYLLDKEGIKKDIKQSLDYPVIVKPAMLGSSIGISIAYNETQIEKCIEEAFAYDLTVVIEKFMRAREIECAVIGNEQIKIFTPGEIVIQDFVFYDYDAKYSTAPGNSVVFNIPAHLDTKHLLDIKEYAFFTYKCLELRGMARIDFLIEKDTDLVYINEINTIPGFTDISMFSKMCEHDGLDYGSLVDKLIALAFQSYAKRKERIDFHRLEN.

An ATP-grasp domain is found at 135–345; it reads KLLLKSFNIP…YGSLVDKLIA (211 aa). An ATP-binding site is contributed by 168-223; sequence KQSLDYPVIVKPAMLGSSIGISIAYNETQIEKCIEEAFAYDLTVVIEKFMRAREIE. 3 residues coordinate Mg(2+): Asp-298, Glu-312, and Asn-314.

The protein belongs to the D-alanine--D-alanine ligase family. Mg(2+) is required as a cofactor. Mn(2+) serves as cofactor.

The protein resides in the cytoplasm. The enzyme catalyses 2 D-alanine + ATP = D-alanyl-D-alanine + ADP + phosphate + H(+). Its pathway is cell wall biogenesis; peptidoglycan biosynthesis. In terms of biological role, cell wall formation. The sequence is that of D-alanine--D-alanine ligase from Borrelia turicatae (strain 91E135).